Consider the following 175-residue polypeptide: Snake venom metalloproteinase BpMP-1 (175 aa).

The Peptidase M12B domain occupies Tyr-1–Lys-175. Ca(2+)-binding residues include Glu-3 and Asp-74. 3 disulfide bridges follow: Cys-98/Cys-171, Cys-131/Cys-155, and Cys-133/Cys-138. A Zn(2+)-binding site is contributed by His-117. Residue Glu-118 is part of the active site. Residues His-121 and His-127 each coordinate Zn(2+). Ca(2+) is bound by residues Cys-171 and Asn-174.

It belongs to the venom metalloproteinase (M12B) family. P-I subfamily. Monomer. Requires Zn(2+) as cofactor. As to expression, expressed by the venom gland.

The protein localises to the secreted. Inhibited by EDTA, 1,10-phenanthroline and beta-mercaptoethanol. Not inhibited by the serine protease inhibitors aprotinin and benzamidin. Its function is as follows. Non-hemorrhagic snake venom zinc metalloprotease that hydrolyzes the Aalpha-chain of fibrinogen, more slowly the Bbeta-chain and shows no effect on the gamma chain. Has no coagulant activity on bovine plasma and fibrinogen. The sequence is that of Snake venom metalloproteinase BpMP-1 from Bothrops pauloensis (Neuwied's lancehead).